Consider the following 154-residue polypeptide: Minor structural pilin EpdC (154 aa).

Positions 1–13 (MIKMLQLPFNKKG) are excised as a propeptide. Positions 14 to 24 (QVSFDFIIAML) match the QXSXEXXXL motif.

In terms of processing, the N-terminus is cleaved by the prepilin peptidase EppA, which recognizes the class III signal sequence.

It is found in the secreted. The protein resides in the cell surface. Its subcellular location is the fimbrium. Functionally, minor component of the type IV-like pili. Essential for pili formation. The sequence is that of Minor structural pilin EpdC from Methanococcus maripaludis (strain DSM 14266 / JCM 13030 / NBRC 101832 / S2 / LL).